The following is a 36-amino-acid chain: F420-dependent NADP reductase (36 aa).

9-12 (TGNI) contacts NADP(+).

Belongs to the F420-dependent NADP reductase family. In terms of assembly, homotetramer.

The catalysed reaction is reduced coenzyme F420-(gamma-L-Glu)(n) + NADP(+) = oxidized coenzyme F420-(gamma-L-Glu)(n) + NADPH + 2 H(+). Catalyzes the reduction of NADP(+) with F420H(2) via hydride transfer, and the reverse reaction, i.e. the reduction of F420 with NADPH. In M.organophilum, an alcohol-fermenting methanogen containing an NADP-dependent alcohol dehydrogenase, is probably involved in the regeneration of F420H(2) required for CO(2) reduction to methane. Thus, during growth on alcohol and CO(2), the F420-dependent NADP reductase probably has the function of coupling the NADP-dependent oxidation of the alcohol to the aldehyde with the F420-dependent reduction of CO(2) to methane. In Methanogenium organophilum, this protein is F420-dependent NADP reductase (fno).